The primary structure comprises 221 residues: Large ribosomal subunit protein uL3 (221 aa).

Belongs to the universal ribosomal protein uL3 family. In terms of assembly, part of the 50S ribosomal subunit. Forms a cluster with proteins L14 and L19.

One of the primary rRNA binding proteins, it binds directly near the 3'-end of the 23S rRNA, where it nucleates assembly of the 50S subunit. The sequence is that of Large ribosomal subunit protein uL3 from Chlamydia abortus (strain DSM 27085 / S26/3) (Chlamydophila abortus).